Reading from the N-terminus, the 236-residue chain is 2,3,4,5-tetrahydropyridine-2,6-dicarboxylate N-acetyltransferase (236 aa).

This sequence belongs to the transferase hexapeptide repeat family. DapH subfamily.

It catalyses the reaction (S)-2,3,4,5-tetrahydrodipicolinate + acetyl-CoA + H2O = L-2-acetamido-6-oxoheptanedioate + CoA. Its pathway is amino-acid biosynthesis; L-lysine biosynthesis via DAP pathway; LL-2,6-diaminopimelate from (S)-tetrahydrodipicolinate (acetylase route): step 1/3. Its function is as follows. Catalyzes the transfer of an acetyl group from acetyl-CoA to tetrahydrodipicolinate. This Bacillus licheniformis (strain ATCC 14580 / DSM 13 / JCM 2505 / CCUG 7422 / NBRC 12200 / NCIMB 9375 / NCTC 10341 / NRRL NRS-1264 / Gibson 46) protein is 2,3,4,5-tetrahydropyridine-2,6-dicarboxylate N-acetyltransferase.